We begin with the raw amino-acid sequence, 493 residues long: Transcript termination protein OPG145 (493 aa).

Residues 100 to 256 (MIESKRPLYI…NSIINIAKLS (157 aa)) enclose the Helicase ATP-binding domain. Position 113-120 (113-120 (LACGFGKT)) interacts with ATP. A DESH box motif is present at residues 206-209 (DESH). The Helicase C-terminal domain occupies 309 to 456 (ILDTLVEEFK…IISLSVDKLG (148 aa)).

Belongs to the helicase family. Poxviruses subfamily. Interacts with OPG087. Might be part of a transcription complex composed at least of OPG087, OPG110, and OPG145.

It localises to the virion. In terms of biological role, DNA helicase which seems to act as a postreplicative transcription termination factor. Involved in ATP-dependent release of nascent RNA. Forms a stable complex with single-stranded DNA, and to a lesser extent RNA. This chain is Transcript termination protein OPG145 (OPG145), found in Homo sapiens (Human).